Here is a 177-residue protein sequence, read N- to C-terminus: Probable DNA-directed RNA polymerase subunit delta (177 aa).

Residues 14–83 form the HTH HARE-type domain; that stretch reads LSMIEVARAI…GENKWGLRSW (70 aa). Acidic residues-rich tracts occupy residues 117–134 and 142–157; these read GDDD…DEDN and EYDD…EVES. Positions 117–164 are disordered; the sequence is GDDDAIDYGHDDPEDEDNYPGSVSSEYDDENPDDEKDEVESYDQKSTK.

It belongs to the RpoE family. In terms of assembly, RNAP is composed of a core of 2 alpha, a beta and a beta' subunits. The core is associated with a delta subunit and one of several sigma factors.

Participates in both the initiation and recycling phases of transcription. In the presence of the delta subunit, RNAP displays an increased specificity of transcription, a decreased affinity for nucleic acids, and an increased efficiency of RNA synthesis because of enhanced recycling. The sequence is that of Probable DNA-directed RNA polymerase subunit delta from Streptococcus suis (strain 98HAH33).